Here is a 341-residue protein sequence, read N- to C-terminus: Mitochondrial transcription factor 1 (341 aa).

S-adenosyl-L-methionine is bound by residues Leu23, Glu77, Asp101, and Asn137.

Belongs to the class I-like SAM-binding methyltransferase superfamily. rRNA adenine N(6)-methyltransferase family.

The protein localises to the mitochondrion intermembrane space. Its function is as follows. Mitochondrial transcription factor that confers selective promoter recognition on the core subunit of the yeast mitochondrial RNA polymerase. Interacts with DNA in a non-specific manner. This is Mitochondrial transcription factor 1 (MTF1) from Saccharomyces cerevisiae (strain ATCC 204508 / S288c) (Baker's yeast).